Reading from the N-terminus, the 288-residue chain is Ribonuclease HIII (288 aa).

The region spanning tyrosine 76–asparagine 288 is the RNase H type-2 domain. Residues aspartate 82, glutamate 83, and aspartate 185 each coordinate a divalent metal cation.

This sequence belongs to the RNase HII family. RnhC subfamily. Requires Mn(2+) as cofactor. The cofactor is Mg(2+).

It localises to the cytoplasm. The catalysed reaction is Endonucleolytic cleavage to 5'-phosphomonoester.. In terms of biological role, endonuclease that specifically degrades the RNA of RNA-DNA hybrids. The sequence is that of Ribonuclease HIII from Phytoplasma mali (strain AT).